The sequence spans 258 residues: Phosphate import ATP-binding protein PstB (258 aa).

The ABC transporter domain maps to 12–253 (LEVKNLNFYY…PARKETEDYI (242 aa)). 44 to 51 (GPSGCGKS) is a binding site for ATP.

It belongs to the ABC transporter superfamily. Phosphate importer (TC 3.A.1.7) family. As to quaternary structure, the complex is composed of two ATP-binding proteins (PstB), two transmembrane proteins (PstC and PstA) and a solute-binding protein (PstS).

Its subcellular location is the cell inner membrane. The enzyme catalyses phosphate(out) + ATP + H2O = ADP + 2 phosphate(in) + H(+). Its function is as follows. Part of the ABC transporter complex PstSACB involved in phosphate import. Responsible for energy coupling to the transport system. The chain is Phosphate import ATP-binding protein PstB from Bordetella parapertussis (strain 12822 / ATCC BAA-587 / NCTC 13253).